Here is a 614-residue protein sequence, read N- to C-terminus: Phragmoplastin DRP1C (614 aa).

In terms of domain architecture, Dynamin-type G spans 32 to 301; the sequence is WEALPTVAVV…LETVIRQKIP (270 aa). The G1 motif stretch occupies residues 42 to 49; sequence GGQSSGKS. Position 45-50 (45-50) interacts with GTP; sequence SSGKSS. The G2 motif stretch occupies residues 68 to 70; that stretch reads VTR. The G3 motif stretch occupies residues 143–146; it reads DLPG. Residues 212 to 215 form a G4 motif region; sequence TKLD. GTP is bound by residues 213–218 and 243–246; these read KLDIMD and NRSQ. The G5 motif stretch occupies residues 242-245; it reads VNRS. A disordered region spans residues 499–519; that stretch reads EPEKEKPNPRNAPAPNADPYS. Positions 507–517 are enriched in low complexity; sequence PRNAPAPNADP. The 92-residue stretch at 523-614 folds into the GED domain; sequence FRKIGSNVSA…RDDIDAVAWK (92 aa).

This sequence belongs to the TRAFAC class dynamin-like GTPase superfamily. Dynamin/Fzo/YdjA family. In terms of assembly, forms homodimer and may homooligomerize and heterooligomerize to form the phragmoplastin complex. Binds to PHIP1. Ubiquitous.

Its subcellular location is the cytoplasm. The protein resides in the cytoskeleton. It is found in the cell cortex. The protein localises to the cytoplasmic vesicle. It localises to the clathrin-coated vesicle. Its subcellular location is the phragmoplast. The enzyme catalyses GTP + H2O = GDP + phosphate + H(+). Its function is as follows. Microtubule-associated force-producing protein that is targeted to the growing edges of the cell plate during cytokinesis. Also plays a major role in plasma membrane maintenance during pollen maturation. Has a GTPase activity. This is Phragmoplastin DRP1C from Arabidopsis thaliana (Mouse-ear cress).